A 113-amino-acid chain; its full sequence is Cholecystoxin (113 aa).

The first 20 residues, 1-20, serve as a signal peptide directing secretion; it reads MYGGICLCVLLAVLAISSSG. Residues 21–79 constitute a propeptide that is removed on maturation; sequence QHISRSLNGNSLAAAIEQNFPEKHRPARTPDSNQRVESNIDEKANLGVLLARYLQKARR. Positions 77-97 are disordered; that stretch reads ARRGTNGKPPDPKKESQDYLG. At tyrosine 95 the chain carries Sulfotyrosine. The residue at position 101 (phenylalanine 101) is a Phenylalanine amide. Residues 102 to 113 constitute a propeptide that is removed on maturation; the sequence is GRRSAEEYEYSS.

The protein belongs to the gastrin/cholecystokinin family. As to expression, expressed by the mandibular venom gland.

The protein resides in the secreted. Cholecystokinin-22: hypotensive neuropeptide that binds cholecystokinin receptor type A receptor (CCKAR). In terms of biological role, cholecystokinin-8: hypotensive neuropeptide that binds cholecystokinin receptor type A receptor (CCKAR). The chain is Cholecystoxin from Varanus varius (Lace monitor lizard).